Reading from the N-terminus, the 634-residue chain is MAHYNFKKITVVPSAKDFIDLTLSKTQRKTPTVIHKHYQIHRIRHFYMRKVKFTQQNYHDRLSQILTDFPKLDDIHPFYADLMNILYDKDHYKLALGQINIAKNLVDNVAKDYVRLMKYGDSLYRCKQLKRAALGRMCTVIKRQKQSLEYLEQVRQHLSRLPTIDPNTRTLLLCGYPNVGKSSFINKVTRADVDVQPYAFTTKSLFVGHMDYKYLRWQVVDTPGILDHPLEDRNTIEMQAITALAHLRAAVLYVMDLSEQCGHGLREQLELFQNIRPLFINKPLIVVANKCDVKRIAELSEDDQKIFTDLQSEGFPVIETSTLTEEGVIKVKTEACDRLLAHRVETKMKGNKVNEVLNRLHLAIPTRRDDKERPPFIPEGVVARRKRMETEESRKKRERDLELEMGDDYILDLQKYWDLMNLSEKHDKIPEIWEGHNIADYIDPAIMKKLEELEKEEELRTAAGEYDSVSESEDEEMLEIRQLAKQIREKKKLKILESKEKNTQGPRMPRTAKKVQRTVLEKEMRSLGVDMDDKDDAHYAVQARRSRSITRKRKREDSAPPSSVARSGSCSRTPRDVSGLRDVKMVKKAKTMMKNAQKKMNRLGKKGEADRHVFDMKPKHLLSGKRKAGKKDRR.

Residue A2 is modified to N-acetylalanine. K103 is subject to N6-acetyllysine; alternate. K103 is covalently cross-linked (Glycyl lysine isopeptide (Lys-Gly) (interchain with G-Cter in SUMO2); alternate). Residue S122 is modified to Phosphoserine. Residues 169 to 340 (RTLLLCGYPN…VKTEACDRLL (172 aa)) form the OBG-type G domain. GTP is bound by residues 175–182 (GYPNVGKS), 221–225 (DTPGI), and 289–292 (NKCD). K332 is covalently cross-linked (Glycyl lysine isopeptide (Lys-Gly) (interchain with G-Cter in SUMO2)). Phosphoserine occurs at positions 468, 470, and 472. The disordered stretch occupies residues 495–517 (ILESKEKNTQGPRMPRTAKKVQR). K522 is modified (N6-acetyllysine). The interval 529-634 (VDMDDKDDAH…KRKAGKKDRR (106 aa)) is disordered. K534 participates in a covalent cross-link: Glycyl lysine isopeptide (Lys-Gly) (interchain with G-Cter in SUMO2). Positions 544–554 (RRSRSITRKRK) are enriched in basic residues. Phosphoserine is present on S558. Positions 560–572 (PPSSVARSGSCSR) are enriched in polar residues. Over residues 573-585 (TPRDVSGLRDVKM) the composition is skewed to basic and acidic residues. A compositionally biased stretch (basic residues) spans 586-604 (VKKAKTMMKNAQKKMNRLG). Positions 605-618 (KKGEADRHVFDMKP) are enriched in basic and acidic residues. The segment covering 619–634 (KHLLSGKRKAGKKDRR) has biased composition (basic residues).

The protein belongs to the TRAFAC class OBG-HflX-like GTPase superfamily. OBG GTPase family. NOG subfamily. In terms of assembly, associates with pre-60S ribosomal particles. Interacts with MINAS-60 (product of an alternative open reading frame of RBM10).

The protein localises to the nucleus. It localises to the nucleolus. In terms of biological role, involved in the biogenesis of the 60S ribosomal subunit. Acts as a TP53 repressor, preventing TP53 stabilization and cell cycle arrest. This Homo sapiens (Human) protein is GTP-binding protein 4.